The following is a 598-amino-acid chain: Nuclear receptor subfamily 4 group A member 1 (598 aa).

Disordered stretches follow at residues 1-43 (MPCI…PEAA) and 128-151 (GSDYYGSPCSAPSPSTPSFQPPQL). Over residues 134-145 (SPCSAPSPSTPS) the composition is skewed to low complexity. The interval 171-466 (RAWTEQLPKA…PAEGKLIFCS (296 aa)) is required for nuclear import. The nuclear receptor DNA-binding region spans 264–339 (EGRCAVCGDN…VGMVKEVVRT (76 aa)). NR C4-type zinc fingers lie at residues 267–287 (CAVCGDNASCQHYGVRTCEGC) and 303–327 (CLANKDCPVDKRRRNRCQFCRFQKC). Residues 268 to 354 (AVCGDNASCQ…RRGRLPSKPK (87 aa)) are required for binding NBRE-containing DNA. The tract at residues 299-361 (AKYICLANKD…KPKQPPETSP (63 aa)) is required for the interaction with RXRA. Ser341 carries the post-translational modification Phosphoserine; by PKA. The disordered stretch occupies residues 341-361 (SLKGRRGRLPSKPKQPPETSP). At Ser351 the chain carries Phosphoserine; by PKA, RPS6KA1 and RPS6KA3. The NR LBD domain occupies 360 to 595 (SPAHLLTSLV…PIVDKIFMDT (236 aa)). The interval 521–544 (PRRVEELQNRIASCLKEHVSAEAG) is binds lipopolysaccharide. The segment at 584–595 (PPPIVDKIFMDT) is AF-2.

This sequence belongs to the nuclear hormone receptor family. NR4 subfamily. As to quaternary structure, binds the NGFI-B response element (NBRE) as a monomer. Binds the Nur response element (NurRE), consisting of two inverse NBRE-related octanucleotide repeats separated by 6 base-pairs, as a dimer. Interacts (via N-terminus) with NLRP3 (via LRR repeat domain); the interaction is direct, requires binding of NR4A1/Nur77 to NBRE-containing dsDNA and lipopolysaccharide, and leads to non-canonical NLRP3 inflammasome activation. Interacts with GADD45GIP1. Interacts with STK11. Interacts with IFI27. Heterodimer (via DNA-binding domain) with RXRA (via C-terminus); DNA-binding of the heterodimer is enhanced by 9-cis retinoic acid. Competes for the RXRA interaction with EP300 and thereby attenuates EP300 mediated acetylation of RXRA. Interacts with NCOA1. Interacts with NCOA2. Interacts with NCOA3. The cofactor is Zn(2+). Post-translationally, phosphorylated at Ser-351 by RPS6KA1 and RPS6KA3 in response to mitogenic or stress stimuli. Acetylated by p300/CBP, acetylation increases stability. Deacetylated by HDAC1.

The protein resides in the nucleus. The protein localises to the cytoplasm. It localises to the cytosol. Its subcellular location is the mitochondrion. Functionally, orphan nuclear receptor. Binds the NGFI-B response element (NBRE) 5'-AAAGGTCA-3'. Binds 9-cis-retinoic acid outside of its ligand-binding (NR LBD) domain. Participates in energy homeostasis by sequestrating the kinase STK11 in the nucleus, thereby attenuating cytoplasmic AMPK activation. Regulates the inflammatory response in macrophages by regulating metabolic adaptations during inflammation, including repressing the transcription of genes involved in the citric acid cycle (TCA). Inhibits NF-kappa-B signaling by binding to low-affinity NF-kappa-B binding sites, such as at the IL2 promoter. May act concomitantly with NR4A2 in regulating the expression of delayed-early genes during liver regeneration. Plays a role in the vascular response to injury. In terms of biological role, in the cytosol, upon its detection of both bacterial lipopolysaccharide (LPS) and NBRE-containing mitochondrial DNA released by GSDMD pores during pyroptosis, it promotes non-canonical NLRP3 inflammasome activation by stimulating association of NLRP3 and NEK7. The protein is Nuclear receptor subfamily 4 group A member 1 (NR4A1) of Bos taurus (Bovine).